The sequence spans 591 residues: Isocitrate dehydrogenase kinase/phosphatase (591 aa).

ATP contacts are provided by residues 315–321 (APGVKGM) and lysine 336. Residue aspartate 371 is part of the active site.

The protein belongs to the AceK family.

Its subcellular location is the cytoplasm. The enzyme catalyses L-seryl-[isocitrate dehydrogenase] + ATP = O-phospho-L-seryl-[isocitrate dehydrogenase] + ADP + H(+). In terms of biological role, bifunctional enzyme which can phosphorylate or dephosphorylate isocitrate dehydrogenase (IDH) on a specific serine residue. This is a regulatory mechanism which enables bacteria to bypass the Krebs cycle via the glyoxylate shunt in response to the source of carbon. When bacteria are grown on glucose, IDH is fully active and unphosphorylated, but when grown on acetate or ethanol, the activity of IDH declines drastically concomitant with its phosphorylation. The polypeptide is Isocitrate dehydrogenase kinase/phosphatase (Pectobacterium atrosepticum (strain SCRI 1043 / ATCC BAA-672) (Erwinia carotovora subsp. atroseptica)).